Consider the following 131-residue polypeptide: Large ribosomal subunit protein bL19 (131 aa).

This sequence belongs to the bacterial ribosomal protein bL19 family.

Its function is as follows. This protein is located at the 30S-50S ribosomal subunit interface and may play a role in the structure and function of the aminoacyl-tRNA binding site. This chain is Large ribosomal subunit protein bL19, found in Caulobacter sp. (strain K31).